Consider the following 162-residue polypeptide: MGQAQSDENSIPTTTTTNTPPPSANSPRDSEDTSSPSMDSLLAEAAAYGEDDNENESLEAKAQRALDCPCIADLRNGSCGSQFSEAFLCFLKSTAEEKGSDCVNPFVALQSCINANPDAFSKSVTGDEKETEKKEEQPPVQDHRIIPPLWAKDPPRSGNSKL.

The disordered stretch occupies residues 1–61 (MGQAQSDENS…DNENESLEAK (61 aa)). Residues 9-18 (NSIPTTTTTN) show a composition bias toward low complexity. 3 cysteine pairs are disulfide-bonded: Cys68–Cys70, Cys79–Cys112, and Cys89–Cys102. The CHCH domain maps to 76–120 (NGSCGSQFSEAFLCFLKSTAEEKGSDCVNPFVALQSCINANPDAF). 2 short sequence motifs (cx9C motif) span residues 79 to 89 (CGSQFSEAFLC) and 102 to 112 (CVNPFVALQSC). Residues 119 to 162 (AFSKSVTGDEKETEKKEEQPPVQDHRIIPPLWAKDPPRSGNSKL) are disordered. The span at 125 to 145 (TGDEKETEKKEEQPPVQDHRI) shows a compositional bias: basic and acidic residues.

It localises to the mitochondrion intermembrane space. Its subcellular location is the peroxisome matrix. Functionally, required for the import and folding of small cysteine-containing proteins in the mitochondrial intermembrane space. Involved in the mitochondrial oxidative folding of the copper-zinc superoxide dismutase CSD1, the copper chaperone for superoxide dismutase CCS, and subunits of the mitochondrial membrane respiratory chain NADH dehydrogenase (Complex I). Involved in the peroxisomal oxidative folding of the copper-zinc superoxide dismutase CSD3, and the fatty acid beta-oxidation multifunctional protein AIM1. The chain is Mitochondrial intermembrane space import and assembly protein 40 homolog from Arabidopsis thaliana (Mouse-ear cress).